The chain runs to 111 residues: Dynein light chain Tctex-type (111 aa).

It belongs to the dynein light chain Tctex-type family.

The protein localises to the cytoplasm. The protein resides in the cytoskeleton. Functionally, acts as a non-catalytic accessory component of a dynein complex. The sequence is that of Dynein light chain Tctex-type (dlcA) from Dictyostelium discoideum (Social amoeba).